We begin with the raw amino-acid sequence, 902 residues long: Cytosolic 10-formyltetrahydrofolate dehydrogenase (902 aa).

The hydrolase domain stretch occupies residues 1–310 (MKIAVIGQSL…PASQFFKGSA (310 aa)). Position 9 is a phosphoserine (serine 9). Lysine 38 carries the post-translational modification N6-succinyllysine. 88–90 (QFI) provides a ligand contact to (6R)-10-formyltetrahydrofolate. Catalysis depends on histidine 106, which acts as the Proton donor. (6R)-10-formyltetrahydrofolate is bound at residue aspartate 142. The 78-residue stretch at 318-395 (EEELATAEAV…DFIQLLVRKL (78 aa)) folds into the Carrier domain. Serine 354 is subject to O-(pantetheine 4'-phosphoryl)serine. The segment at 417–902 (TLQMPYQLFI…LRIKTVTFEY (486 aa)) is aldehyde dehydrogenase domain. Residues 571–573 (IPW) and 597–600 (KPAQ) each bind NADP(+). Phosphoserine occurs at positions 629 and 631. NADP(+) contacts are provided by residues 630–635 (GSLVGQ) and 650–651 (GS). Residue lysine 660 is modified to N6-succinyllysine. The active-site Proton acceptor is glutamate 673. 673–674 (EL) contacts NADP(+). Residue cysteine 707 is the Proton donor of the active site. Lysine 757 contacts NADP(+). Position 767 is an N6-succinyllysine (lysine 767). Residue 804 to 806 (ESF) coordinates NADP(+). At serine 825 the chain carries Phosphoserine. N6-acetyllysine is present on lysine 882.

It in the N-terminal section; belongs to the GART family. In the C-terminal section; belongs to the aldehyde dehydrogenase family. ALDH1L subfamily. In terms of assembly, homotetramer. In terms of processing, phosphopantetheinylation at Ser-354 by AASDHPPT is required for the formyltetrahydrofolate dehydrogenase activity. As to expression, highly expressed in liver (at protein level). Also expressed in pancreas, brain and lung (at protein level).

The protein localises to the cytoplasm. It is found in the cytosol. It catalyses the reaction (6R)-10-formyltetrahydrofolate + NADP(+) + H2O = (6S)-5,6,7,8-tetrahydrofolate + CO2 + NADPH + H(+). Functionally, cytosolic 10-formyltetrahydrofolate dehydrogenase that catalyzes the NADP(+)-dependent conversion of 10-formyltetrahydrofolate to tetrahydrofolate and carbon dioxide. May also have an NADP(+)-dependent aldehyde dehydrogenase activity towards formaldehyde, acetaldehyde, propionaldehyde, and benzaldehyde. The protein is Cytosolic 10-formyltetrahydrofolate dehydrogenase of Mus musculus (Mouse).